The primary structure comprises 43 residues: ORF7b protein (43 aa).

A helical membrane pass occupies residues 9 to 29 (FYLCFLAFLLFLVLIMLIIFW).

The protein resides in the host Golgi apparatus membrane. It is found in the host endosome membrane. The polypeptide is ORF7b protein (Homo sapiens (Human)).